Consider the following 236-residue polypeptide: Apoptosis regulator Bcl-2 (236 aa).

The short motif at 10–30 is the BH4 element; it reads DNREIVMKYIHYKLSQRGYEW. A Phosphothreonine; by MAPK8 modification is found at Thr-69. Ser-70 is subject to Phosphoserine; by MAPK8 and PKC. Ser-84 carries the post-translational modification Phosphoserine; by MAPK8. The BH3 signature appears at 90 to 104; it reads VHLTLRRAGDDFSRR. The short motif at 133–152 is the BH1 element; it reads ELFRDGVNWGRIVAFFEFGG. The BH2 signature appears at 184–199; sequence TWIQDNGGWDAFVELY. Residues 209-230 form a helical membrane-spanning segment; that stretch reads FSWLSLKTLLSLALVGACITLG.

It belongs to the Bcl-2 family. Forms homodimers, and heterodimers with BAX, BAD, BAK and Bcl-X(L). Heterodimerization with BAX requires intact BH1 and BH2 motifs, and is necessary for anti-apoptotic activity. Component of the complex, at least composed of LRPPRC, BECN1 and BCL2; the interactions prevent BECN1 from forming an autophagy-inducing complex with PIK3C3. Interacts with EI24. Also interacts with APAF1, BBC3, BCL2L1, BNIPL, MRPL41 and TP53BP2. Binding to FKBP8 seems to target BCL2 to the mitochondria and probably interferes with the binding of BCL2 to its targets. Interacts with BAG1 in an ATP-dependent manner. Interacts with RAF1 (the 'Ser-338' and 'Ser-339' phosphorylated form). Interacts (via the BH4 domain) with EGLN3; the interaction prevents the formation of the BAX-BCL2 complex and inhibits the anti-apoptotic activity of BCL2. Interacts with G0S2; this interaction also prevents the formation of the anti-apoptotic BAX-BCL2 complex. Interacts with RTL10/BOP. Interacts with the SCF(FBXO10) complex. Interacts (via the loop between motifs BH4 and BH3) with NLRP1 (via LRR repeats), but not with NLRP2, NLRP3, NLRP4, PYCARD, nor MEFV. Interacts with GIMAP3/IAN4, GIMAP4/IAN1 and GIMAP5/IAN5. Interacts with BCAP31. Interacts with IRF3; the interaction is inhibited by Sendai virus infection. Interacts with BECN1; thereby inhibiting autophagy in non-starvation conditions. Interacts with AMBRA1; thereby inhibiting autophagy. In terms of processing, phosphorylation/dephosphorylation on Ser-70 regulates anti-apoptotic activity. Growth factor-stimulated phosphorylation on Ser-70 by PKC is required for the anti-apoptosis activity and occurs during the G2/M phase of the cell cycle. In the absence of growth factors, BCL2 appears to be phosphorylated by other protein kinases such as ERKs and stress-activated kinases. Phosphorylated by MAPK8/JNK1 at Thr-69, Ser-70 and Ser-84, which stimulates starvation-induced autophagy. Dephosphorylated by protein phosphatase 2A (PP2A). Post-translationally, proteolytically cleaved by caspases during apoptosis. The cleaved protein, lacking the BH4 motif, has pro-apoptotic activity, causes the release of cytochrome c into the cytosol promoting further caspase activity. Monoubiquitinated by PRKN, leading to an increase in its stability. Ubiquitinated by SCF(FBXO10), leading to its degradation by the proteasome.

The protein localises to the mitochondrion outer membrane. Its subcellular location is the nucleus membrane. The protein resides in the endoplasmic reticulum membrane. It localises to the cytoplasm. Functionally, suppresses apoptosis in a variety of cell systems including factor-dependent lymphohematopoietic and neural cells. Regulates cell death by controlling the mitochondrial membrane permeability. Appears to function in a feedback loop system with caspases. Inhibits caspase activity either by preventing the release of cytochrome c from the mitochondria and/or by binding to the apoptosis-activating factor (APAF-1). Also acts as an inhibitor of autophagy: interacts with BECN1 and AMBRA1 during non-starvation conditions and inhibits their autophagy function. May attenuate inflammation by impairing NLRP1-inflammasome activation, hence CASP1 activation and IL1B release. In Cricetulus griseus (Chinese hamster), this protein is Apoptosis regulator Bcl-2 (BCL2).